The following is a 487-amino-acid chain: Putative beta-glucosidase 35 (487 aa).

The first 27 residues, Met-1–Ala-27, serve as a signal peptide directing secretion. Position 48 (Gln-48) interacts with a beta-D-glucoside. N-linked (GlcNAc...) asparagine glycans are attached at residues Asn-76 and Asn-116. A beta-D-glucoside contacts are provided by residues His-151 and Asn-200 to Glu-201. The Proton donor role is filled by Glu-201. A disulfide bridge connects residues Cys-220 and Cys-228. Residue Tyr-344 participates in a beta-D-glucoside binding. Asn-369 is a glycosylation site (N-linked (GlcNAc...) asparagine). Position 414 (Glu-414) interacts with a beta-D-glucoside. Catalysis depends on Glu-414, which acts as the Nucleophile. Asn-418 and Asn-419 each carry an N-linked (GlcNAc...) asparagine glycan. Phe-458 contributes to the a beta-D-glucoside binding site.

Belongs to the glycosyl hydrolase 1 family.

The catalysed reaction is Hydrolysis of terminal, non-reducing beta-D-glucosyl residues with release of beta-D-glucose.. The chain is Putative beta-glucosidase 35 (BGLU35) from Oryza sativa subsp. japonica (Rice).